The chain runs to 157 residues: 2-C-methyl-D-erythritol 2,4-cyclodiphosphate synthase (157 aa).

A divalent metal cation-binding residues include aspartate 8 and histidine 10. Residues aspartate 8–histidine 10 and histidine 34–serine 35 contribute to the 4-CDP-2-C-methyl-D-erythritol 2-phosphate site. Histidine 42 is an a divalent metal cation binding site. 4-CDP-2-C-methyl-D-erythritol 2-phosphate contacts are provided by residues aspartate 56 to glycine 58, phenylalanine 61 to aspartate 65, alanine 100 to alanine 106, threonine 132 to glutamate 135, phenylalanine 139, and arginine 142.

This sequence belongs to the IspF family. In terms of assembly, homotrimer. Requires a divalent metal cation as cofactor.

It carries out the reaction 4-CDP-2-C-methyl-D-erythritol 2-phosphate = 2-C-methyl-D-erythritol 2,4-cyclic diphosphate + CMP. Its pathway is isoprenoid biosynthesis; isopentenyl diphosphate biosynthesis via DXP pathway; isopentenyl diphosphate from 1-deoxy-D-xylulose 5-phosphate: step 4/6. Its function is as follows. Involved in the biosynthesis of isopentenyl diphosphate (IPP) and dimethylallyl diphosphate (DMAPP), two major building blocks of isoprenoid compounds. Catalyzes the conversion of 4-diphosphocytidyl-2-C-methyl-D-erythritol 2-phosphate (CDP-ME2P) to 2-C-methyl-D-erythritol 2,4-cyclodiphosphate (ME-CPP) with a corresponding release of cytidine 5-monophosphate (CMP). The chain is 2-C-methyl-D-erythritol 2,4-cyclodiphosphate synthase from Azotobacter vinelandii (strain DJ / ATCC BAA-1303).